We begin with the raw amino-acid sequence, 235 residues long: tRNA (guanine-N(1)-)-methyltransferase (235 aa).

Residues Gly112 and Ile132–Ile137 each bind S-adenosyl-L-methionine.

Belongs to the RNA methyltransferase TrmD family. As to quaternary structure, homodimer.

It is found in the cytoplasm. The catalysed reaction is guanosine(37) in tRNA + S-adenosyl-L-methionine = N(1)-methylguanosine(37) in tRNA + S-adenosyl-L-homocysteine + H(+). Specifically methylates guanosine-37 in various tRNAs. This is tRNA (guanine-N(1)-)-methyltransferase from Anaplasma marginale (strain St. Maries).